Reading from the N-terminus, the 392-residue chain is Multidrug resistance protein MdtL (392 aa).

The next 12 helical transmembrane spans lie at 4–24 (FLLC…MYLV), 38–58 (AQLH…MLFA), 69–89 (PVAI…AQVH), 95–115 (LIGR…AFAI), 131–151 (LLNG…HLIM), 158–178 (SLFY…VFIL), 209–229 (LLIT…SPVL), 246–266 (ALMA…LSLF), 270–290 (TLML…SLAT), 294–314 (VTLI…GVAM), 331–351 (VLGI…AIIG), and 357–377 (MLIG…LVVT).

This sequence belongs to the major facilitator superfamily. DHA1 family. MdtL (TC 2.A.1.2.22) subfamily.

The protein localises to the cell inner membrane. This is Multidrug resistance protein MdtL from Klebsiella pneumoniae subsp. pneumoniae (strain ATCC 700721 / MGH 78578).